We begin with the raw amino-acid sequence, 338 residues long: 1-aminocyclopropane-1-carboxylate deaminase (338 aa).

K51 bears the N6-(pyridoxal phosphate)lysine mark. S78 acts as the Nucleophile in catalysis.

This sequence belongs to the ACC deaminase/D-cysteine desulfhydrase family. As to quaternary structure, homotrimer. Requires pyridoxal 5'-phosphate as cofactor.

It catalyses the reaction 1-aminocyclopropane-1-carboxylate + H2O = 2-oxobutanoate + NH4(+). Catalyzes a cyclopropane ring-opening reaction, the irreversible conversion of 1-aminocyclopropane-1-carboxylate (ACC) to ammonia and alpha-ketobutyrate. Allows growth on ACC as a nitrogen source. In Pseudomonas putida (Arthrobacter siderocapsulatus), this protein is 1-aminocyclopropane-1-carboxylate deaminase.